The chain runs to 189 residues: MDTEYQQVNKPWNELYKEVTLGNKLTVNVGMEEEEVLLLPSNFLTKVRVSMSGGYITVRRVRIRIIPLVSRKAGVSGKLYLRDISDTTGQKLHCTELLDLGKEIRLTMPHLDFSVSAKSDVPIAFGFEELVSPFREGRELFSVSLRWQLGLSAQCYSLPPANVKVMYQEDALKALKPSKKKASRTDSSV.

This sequence belongs to the tombusvirus/aureusvirus movement protein p22 family.

The protein localises to the host membrane. In terms of biological role, transports viral genome to neighboring plant cells directly through plasmosdesmata, without any budding. The movement protein allows efficient cell to cell propagation, by bypassing the host cell wall barrier. This Cymbidium ringspot virus (CymRSV) protein is Movement protein.